Reading from the N-terminus, the 388-residue chain is Norsolorinic acid reductase A (388 aa).

Residue Asp-69 coordinates NADP(+). Catalysis depends on Tyr-74, which acts as the Proton donor. His-148 is a substrate binding site. Residues 178 to 179, Gln-204, 233 to 243, and 300 to 308 contribute to the NADP(+) site; these read SD, GVLGRGQFRSA, and RKVEHLKEN.

The protein belongs to the aldo/keto reductase family. Aldo/keto reductase 2 subfamily.

It participates in mycotoxin biosynthesis; aflatoxin biosynthesis. Norsolorinic acid reductase; part of the gene cluster that mediates the biosynthesis of aflatoxins, a group of polyketide-derived furanocoumarins, and part of the most toxic and carcinogenic compounds among the known mycotoxins. The four major aflatoxins produced by A.parasiticus are aflatoxin B1 (AFB1), aflatoxin B2 (AFB2), aflatoxin G1 (AFG1) and aflatoxin G2 (AFG2). Within the aflatoxin pathway, the norsolorinic acid reductase aflE may play a role in the conversion of norsolorinic acid (NOR) to averantin (AVN). The biosynthesis of aflatoxins begins with the norsolorinic acid synthase aflC that combines a hexanoyl starter unit produced by the fatty acid synthase aflA/aflB and 7 malonyl-CoA extender units to synthesize the precursor NOR. The second step is the conversion of NOR to averantin and requires the norsolorinic acid ketoreductase aflD, which catalyzes the dehydration of norsolorinic acid to form (1'S)-averantin. The norsolorinic acid reductases aflE and aflF may also play a role in the conversion of NOR to AVN. The cytochrome P450 monooxygenase aflG then catalyzes the hydroxylation of AVN to 5'hydroxyaverantin (HAVN). The next step is performed by the 5'-hydroxyaverantin dehydrogenase aflH that transforms HAVN to 5'-oxoaverantin (OAVN) which is further converted to averufin (AVF) by aflK that plays a dual role in the pathway, as a 5'-oxoaverantin cyclase that mediates conversion of 5'-oxoaverantin, as well as a versicolorin B synthase in a later step in the pathway. The averufin oxidase aflI catalyzes the conversion of AVF to versiconal hemiacetal acetate (VHA). VHA is then the substrate for the versiconal hemiacetal acetate esterase aflJ to yield versiconal (VAL). Versicolorin B synthase aflK then converts VAL to versicolorin B (VERB) by closing the bisfuran ring of aflatoxin which is required for DNA-binding, thus giving to aflatoxin its activity as a mutagen. Then, the activity of the versicolorin B desaturase aflL leads to versicolorin A (VERA). A branch point starts from VERB since it can also be converted to dihydrodemethylsterigmatocystin (DMDHST), probably also by aflL, VERA being a precursor for aflatoxins B1 and G1, and DMDHST for aflatoxins B2 and G2. Next, the versicolorin reductase aflM and the cytochrome P450 monooxygenase aflN are involved in conversion of VERA to demethylsterigmatocystin (DMST). AflX and aflY seem also involved in this step, through probable aflX-mediated epoxide ring-opening step following versicolorin A oxidation and aflY-mediated Baeyer-Villiger oxidation required for the formation of the xanthone ring. The methyltransferase aflO then leads to the modification of DMST to sterigmatocystin (ST), and of DMDHST to dihydrosterigmatocystin (DHST). Both ST and DHST are then substrates of the O-methyltransferase aflP to yield O-methylsterigmatocystin (OMST) and dihydro-O-methylsterigmatocystin (DHOMST), respectively. Finally OMST is converted to aflatoxins B1 and G1, and DHOMST to aflatoxins B2 and G2, via the action of several enzymes including O-methylsterigmatocystin oxidoreductase aflQ, the cytochrome P450 monooxygenase aflU, but also the NADH-dependent flavin oxidoreductase nadA which is specifically required for the synthesis of AFG1. In Aspergillus parasiticus (strain ATCC 56775 / NRRL 5862 / SRRC 143 / SU-1), this protein is Norsolorinic acid reductase A.